The primary structure comprises 371 residues: DNA replication and repair protein RecF (371 aa).

30–37 (GENAQGKT) contacts ATP.

This sequence belongs to the RecF family.

Its subcellular location is the cytoplasm. In terms of biological role, the RecF protein is involved in DNA metabolism; it is required for DNA replication and normal SOS inducibility. RecF binds preferentially to single-stranded, linear DNA. It also seems to bind ATP. The chain is DNA replication and repair protein RecF from Lysinibacillus sphaericus (strain C3-41).